The chain runs to 370 residues: Proto-oncogene Wnt-1 (370 aa).

An N-terminal signal peptide occupies residues 1 to 27 (MGLWALLPGWVSATLLLALAALPAALA). N-linked (GlcNAc...) asparagine glycosylation is present at Asn-29. 11 disulfide bridges follow: Cys-93/Cys-104, Cys-143/Cys-151, Cys-153/Cys-170, Cys-218/Cys-232, Cys-220/Cys-227, Cys-299/Cys-330, Cys-315/Cys-325, Cys-329/Cys-369, Cys-345/Cys-360, Cys-347/Cys-357, and Cys-352/Cys-353. A lipid anchor (O-palmitoleoyl serine; by PORCN) is attached at Ser-224. N-linked (GlcNAc...) asparagine glycosylation is found at Asn-316 and Asn-346. A glycan (N-linked (GlcNAc...) asparagine) is linked at Asn-359.

The protein belongs to the Wnt family. In terms of assembly, forms a soluble 1:1 complex with AFM; this prevents oligomerization and is required for prolonged biological activity. The complex with AFM may represent the physiological form in body fluids. Interacts with PORCN. Interacts with RSPO1, RSPO2 and RSPO3. Interacts with WLS. In terms of processing, palmitoleoylation is required for efficient binding to frizzled receptors. Palmitoleoylation is necessary for proper trafficking to cell surface. Depalmitoleoylated by NOTUM, leading to inhibit Wnt signaling pathway.

The protein resides in the secreted. Its subcellular location is the extracellular space. It localises to the extracellular matrix. Functionally, ligand for members of the frizzled family of seven transmembrane receptors. Acts in the canonical Wnt signaling pathway by promoting beta-catenin-dependent transcriptional activation. In some developmental processes, is also a ligand for the coreceptor RYK, thus triggering Wnt signaling. Plays an essential role in the development of the embryonic brain and central nervous system (CNS). Has a role in osteoblast function, bone development and bone homeostasis. In Homo sapiens (Human), this protein is Proto-oncogene Wnt-1 (WNT1).